Reading from the N-terminus, the 169-residue chain is Small ribosomal subunit protein uS5c (169 aa).

One can recognise an S5 DRBM domain in the interval 17–80; sequence WQERVVQIRR…ADGKKHVVEV (64 aa).

The protein belongs to the universal ribosomal protein uS5 family. As to quaternary structure, part of the 30S ribosomal subunit. Contacts protein S4.

The protein localises to the plastid. Its subcellular location is the cyanelle. Functionally, with S4 and S12 plays an important role in translational accuracy. The polypeptide is Small ribosomal subunit protein uS5c (rps5) (Cyanophora paradoxa).